A 409-amino-acid polypeptide reads, in one-letter code: Elongation factor Tu, chloroplastic (409 aa).

The 205-residue stretch at 10 to 214 folds into the tr-type G domain; that stretch reads KPHVNIGTIG…AVDEYIPTPE (205 aa). A G1 region spans residues 19 to 26; it reads GHVDHGKT. 19-26 contributes to the GTP binding site; that stretch reads GHVDHGKT. Position 26 (T26) interacts with Mg(2+). Residues 60 to 64 form a G2 region; that stretch reads GITIN. The interval 81–84 is G3; it reads DCPG. GTP is bound by residues 81–85 and 136–139; these read DCPGH and NKED. The segment at 136–139 is G4; sequence NKED. The tract at residues 174–176 is G5; the sequence is SAL.

This sequence belongs to the TRAFAC class translation factor GTPase superfamily. Classic translation factor GTPase family. EF-Tu/EF-1A subfamily.

The protein localises to the plastid. Its subcellular location is the chloroplast. The catalysed reaction is GTP + H2O = GDP + phosphate + H(+). In terms of biological role, GTP hydrolase that promotes the GTP-dependent binding of aminoacyl-tRNA to the A-site of ribosomes during protein biosynthesis. The chain is Elongation factor Tu, chloroplastic (tufA) from Trieres chinensis (Marine centric diatom).